Reading from the N-terminus, the 229-residue chain is Large ribosomal subunit protein uL1 (229 aa).

Part of the 50S ribosomal subunit.

Its function is as follows. Binds directly to 23S rRNA. The L1 stalk is quite mobile in the ribosome, and is involved in E site tRNA release. Protein L1 is also a translational repressor protein, it controls the translation of the L11 operon by binding to its mRNA. This is Large ribosomal subunit protein uL1 from Rhodopseudomonas palustris (strain ATCC BAA-98 / CGA009).